Reading from the N-terminus, the 261-residue chain is Thiazole synthase (261 aa).

Lysine 95 serves as the catalytic Schiff-base intermediate with DXP. 1-deoxy-D-xylulose 5-phosphate is bound by residues glycine 156, 182 to 183 (AG), and 204 to 205 (NT).

It belongs to the ThiG family. As to quaternary structure, homotetramer. Forms heterodimers with either ThiH or ThiS.

Its subcellular location is the cytoplasm. The enzyme catalyses [ThiS sulfur-carrier protein]-C-terminal-Gly-aminoethanethioate + 2-iminoacetate + 1-deoxy-D-xylulose 5-phosphate = [ThiS sulfur-carrier protein]-C-terminal Gly-Gly + 2-[(2R,5Z)-2-carboxy-4-methylthiazol-5(2H)-ylidene]ethyl phosphate + 2 H2O + H(+). It participates in cofactor biosynthesis; thiamine diphosphate biosynthesis. Its function is as follows. Catalyzes the rearrangement of 1-deoxy-D-xylulose 5-phosphate (DXP) to produce the thiazole phosphate moiety of thiamine. Sulfur is provided by the thiocarboxylate moiety of the carrier protein ThiS. In vitro, sulfur can be provided by H(2)S. The chain is Thiazole synthase from Pectobacterium atrosepticum (strain SCRI 1043 / ATCC BAA-672) (Erwinia carotovora subsp. atroseptica).